The sequence spans 497 residues: SPI-2 type 3 secretion system secretin (497 aa).

An N-terminal signal peptide occupies residues 1–20; the sequence is MVVNKRLILILLFILNTAKS.

The protein belongs to the bacterial secretin family. T3SS SctC subfamily. The core secretion machinery of the T3SS is composed of approximately 20 different proteins, including cytoplasmic components, a base, an export apparatus and a needle. This subunit is part of the base, which anchors the injectisome in the bacterial cell envelope. Forms a stable homooligomeric complex.

The protein resides in the cell outer membrane. In terms of biological role, component of the type III secretion system (T3SS), also called injectisome, which is used to inject bacterial effector proteins into eukaryotic host cells. Forms a ring-shaped multimeric structure with an apparent central pore in the outer membrane. Required for secretion of some type III-secreted effectors including the SpvB exotoxin. This is SPI-2 type 3 secretion system secretin from Salmonella typhimurium (strain 14028s / SGSC 2262).